The following is a 226-amino-acid chain: MIKTILKNSYIQKEITTHSATVIFSHGLGDSGAGWIEVMEEIQSRNNGHIRFICPNAPIQAVTLNGGFKMPSWYDIKSLSSRGDEDPAQVDESKNIIETIIKHEMEEEKIPAERIIIGGFSQGAALSLYTFYSQTETKLGGCIALSGYLPLATKFVANSLNKEQPLLMIHGDCDQVVRHQWGKLSFDHLKSQGINGEFITLKGLGHHSSPEEIDLMTKFISKTLPK.

Active-site charge relay system residues include Ser-121, Asp-174, and His-206.

Belongs to the AB hydrolase superfamily. AB hydrolase 2 family.

The protein resides in the cytoplasm. It is found in the nucleus. It catalyses the reaction S-hexadecanoyl-L-cysteinyl-[protein] + H2O = L-cysteinyl-[protein] + hexadecanoate + H(+). Hydrolyzes fatty acids from S-acylated cysteine residues in proteins with a strong preference for palmitoylated G-alpha proteins over other acyl substrates. Mediates the deacylation of G-alpha proteins such as GPA1 in vivo, but has weak or no activity toward palmitoylated Ras proteins. Has weak lysophospholipase activity in vitro; however such activity may not exist in vivo. The sequence is that of Acyl-protein thioesterase 1 homolog 1 from Dictyostelium discoideum (Social amoeba).